The following is a 181-amino-acid chain: TATA-box-binding protein (181 aa).

2 tandem repeats follow at residues 7-83 (IVNV…IKEL) and 98-173 (VQNM…SATL).

The protein belongs to the TBP family.

General factor that plays a role in the activation of archaeal genes transcribed by RNA polymerase. Binds specifically to the TATA box promoter element which lies close to the position of transcription initiation. The protein is TATA-box-binding protein of Methanococcus vannielii (strain ATCC 35089 / DSM 1224 / JCM 13029 / OCM 148 / SB).